A 162-amino-acid polypeptide reads, in one-letter code: MAQHPIATLNEELVPRLPPSSPTLFEAKKKKNLSFEAIAKHVGRDEVAIAALFYGQAMASAQDIKKLSEILDIDAGMLESQLSGFPNRGSTLDMPPKDPTIYRLYEIVQNYGQAYKAVLHEKFGDGIMSAISFSTKIEKETDDKGEWAKITLRGKWLPYSRF.

Active-site residues include R103, E106, and S129.

It belongs to the cyanase family.

It carries out the reaction cyanate + hydrogencarbonate + 3 H(+) = NH4(+) + 2 CO2. Functionally, catalyzes the reaction of cyanate with bicarbonate to produce ammonia and carbon dioxide. In Pyrenophora tritici-repentis (strain Pt-1C-BFP) (Wheat tan spot fungus), this protein is Cyanate hydratase.